Here is a 513-residue protein sequence, read N- to C-terminus: Microtubule-associated protein 70-5 (513 aa).

Disordered regions lie at residues 1 to 20 (MTAA…SQLK), 60 to 81 (KLGA…LEEE), 347 to 367 (FLTS…GSVT), and 393 to 413 (ANGL…EDGN). Over residues 9–18 (VSDTSSLQSQ) the composition is skewed to polar residues. Residues 10–322 (SDTSSLQSQL…LKLRLKTIED (313 aa)) are a coiled coil. Basic and acidic residues predominate over residues 60-80 (KLGATENQVDQKELERKKLEE). The required for targeting to microtubules stretch occupies residues 190 to 400 (FLEKINRQKV…ITANGLTDQH (211 aa)). Residues 426–501 (DRLQKEVIAL…EESKLCRKAK (76 aa)) are a coiled coil.

Belongs to the MAP70 family. In terms of assembly, interacts with MAP70.1 and itself.

It localises to the cytoplasm. The protein localises to the cytoskeleton. Functionally, plant-specific protein that interact with microtubules and regulates microtubule dynamics. May play a role in anisotropic cell expansion and organ growth. In association with MAP70.1, is essential for the normal banding pattern of secondary cell wall and for the proper development of xylem tracheary elements and wood formation. This is Microtubule-associated protein 70-5 (MAP70.5) from Arabidopsis thaliana (Mouse-ear cress).